Reading from the N-terminus, the 304-residue chain is MRLPIFLDTDPGIDDAVAIAAAIFAPELDLQLMTTVAGNVSVEKTTRNALQLLHFWNAEIPLAQGAAVPLVRAPRDAASVHGESGMAGYDFVEHNRKPLGIPAFLAIRDALMCAPEPVTLVAIGPLTNIALLLSQCPECKPYIRRLVIMGGSAGRGNCTPNAEFNIAADPEAAACVFRSGIEIVMCGLDVTNQAILTPDYLATLPELNRTGKMLHALFSHYRSGSMQSGLRMHDLCAIAWLVRPDLFTLKPCFVAVETQGEFTSGTTVVDIDGCRGKPANVQVALDLNVKGFQQWVPEVLALAS.

The active site involves histidine 233.

This sequence belongs to the IUNH family. RihC subfamily.

Functionally, hydrolyzes both purine and pyrimidine ribonucleosides with a broad-substrate specificity. This chain is Non-specific ribonucleoside hydrolase RihC, found in Shigella dysenteriae serotype 1 (strain Sd197).